We begin with the raw amino-acid sequence, 256 residues long: 5-keto-4-deoxy-D-glucarate aldolase (256 aa).

Residue histidine 50 is the Proton acceptor of the active site. Glutamine 151 is a binding site for substrate. Residue glutamate 153 participates in Mg(2+) binding. 2 residues coordinate substrate: serine 178 and aspartate 179. Aspartate 179 is a binding site for Mg(2+).

Belongs to the HpcH/HpaI aldolase family. KDGluc aldolase subfamily. In terms of assembly, homohexamer; trimer of dimers. Requires Mg(2+) as cofactor.

The enzyme catalyses 5-dehydro-4-deoxy-D-glucarate = 2-hydroxy-3-oxopropanoate + pyruvate. The catalysed reaction is 2-dehydro-3-deoxy-D-glucarate = 2-hydroxy-3-oxopropanoate + pyruvate. The protein operates within carbohydrate acid metabolism; galactarate degradation; D-glycerate from galactarate: step 2/3. Its function is as follows. Catalyzes the reversible retro-aldol cleavage of both 5-keto-4-deoxy-D-glucarate and 2-keto-3-deoxy-D-glucarate to pyruvate and tartronic semialdehyde. This chain is 5-keto-4-deoxy-D-glucarate aldolase, found in Shigella dysenteriae serotype 1 (strain Sd197).